The sequence spans 227 residues: Cytochrome c oxidase subunit 2 (227 aa).

Topologically, residues 1–14 (MAYPFELGFQDATS) are mitochondrial intermembrane. A helical transmembrane segment spans residues 15-45 (PIMEELLHFHDHTLMIVFLISSLVLYIISLM). At 46 to 59 (LTTKLTHTSTMDAQ) the chain is on the mitochondrial matrix side. A helical transmembrane segment spans residues 60–87 (EVETIWTILPAIILILIALPSLRVLYMM). Residues 88-227 (DEINDPSLTV…HFENWSSSML (140 aa)) lie on the Mitochondrial intermembrane side of the membrane. Cu cation is bound by residues His-161, Cys-196, Glu-198, Cys-200, His-204, and Met-207. Glu-198 contacts Mg(2+).

This sequence belongs to the cytochrome c oxidase subunit 2 family. In terms of assembly, component of the cytochrome c oxidase (complex IV, CIV), a multisubunit enzyme composed of 14 subunits. The complex is composed of a catalytic core of 3 subunits MT-CO1, MT-CO2 and MT-CO3, encoded in the mitochondrial DNA, and 11 supernumerary subunits COX4I, COX5A, COX5B, COX6A, COX6B, COX6C, COX7A, COX7B, COX7C, COX8 and NDUFA4, which are encoded in the nuclear genome. The complex exists as a monomer or a dimer and forms supercomplexes (SCs) in the inner mitochondrial membrane with NADH-ubiquinone oxidoreductase (complex I, CI) and ubiquinol-cytochrome c oxidoreductase (cytochrome b-c1 complex, complex III, CIII), resulting in different assemblies (supercomplex SCI(1)III(2)IV(1) and megacomplex MCI(2)III(2)IV(2)). Found in a complex with TMEM177, COA6, COX18, COX20, SCO1 and SCO2. Interacts with TMEM177 in a COX20-dependent manner. Interacts with COX20. Interacts with COX16. The cofactor is Cu cation.

It localises to the mitochondrion inner membrane. The catalysed reaction is 4 Fe(II)-[cytochrome c] + O2 + 8 H(+)(in) = 4 Fe(III)-[cytochrome c] + 2 H2O + 4 H(+)(out). Its function is as follows. Component of the cytochrome c oxidase, the last enzyme in the mitochondrial electron transport chain which drives oxidative phosphorylation. The respiratory chain contains 3 multisubunit complexes succinate dehydrogenase (complex II, CII), ubiquinol-cytochrome c oxidoreductase (cytochrome b-c1 complex, complex III, CIII) and cytochrome c oxidase (complex IV, CIV), that cooperate to transfer electrons derived from NADH and succinate to molecular oxygen, creating an electrochemical gradient over the inner membrane that drives transmembrane transport and the ATP synthase. Cytochrome c oxidase is the component of the respiratory chain that catalyzes the reduction of oxygen to water. Electrons originating from reduced cytochrome c in the intermembrane space (IMS) are transferred via the dinuclear copper A center (CU(A)) of subunit 2 and heme A of subunit 1 to the active site in subunit 1, a binuclear center (BNC) formed by heme A3 and copper B (CU(B)). The BNC reduces molecular oxygen to 2 water molecules using 4 electrons from cytochrome c in the IMS and 4 protons from the mitochondrial matrix. The sequence is that of Cytochrome c oxidase subunit 2 (MT-CO2) from Sciurus carolinensis (Eastern gray squirrel).